We begin with the raw amino-acid sequence, 353 residues long: tRNA-specific 2-thiouridylase MnmA 2 (353 aa).

ATP is bound at residue L6–S13. The segment at N92 to D94 is interaction with target base in tRNA. The Nucleophile role is filled by C97. A disulfide bridge links C97 with C192. ATP is bound at residue G120. The tract at residues K142–Q144 is interaction with tRNA. C192 functions as the Cysteine persulfide intermediate in the catalytic mechanism.

The protein belongs to the MnmA/TRMU family.

Its subcellular location is the cytoplasm. The catalysed reaction is S-sulfanyl-L-cysteinyl-[protein] + uridine(34) in tRNA + AH2 + ATP = 2-thiouridine(34) in tRNA + L-cysteinyl-[protein] + A + AMP + diphosphate + H(+). Catalyzes the 2-thiolation of uridine at the wobble position (U34) of tRNA, leading to the formation of s(2)U34. This is tRNA-specific 2-thiouridylase MnmA 2 from Bacteroides fragilis (strain YCH46).